The following is a 427-amino-acid chain: Peptidase B (427 aa).

Residues lysine 195 and aspartate 200 each contribute to the Mn(2+) site. Residue lysine 207 is part of the active site. Positions 218, 277, and 279 each coordinate Mn(2+). The active site involves arginine 281.

Belongs to the peptidase M17 family. Homohexamer. Mn(2+) serves as cofactor.

The protein localises to the cytoplasm. The enzyme catalyses Release of an N-terminal amino acid, Xaa, from a peptide or arylamide. Xaa is preferably Glu or Asp but may be other amino acids, including Leu, Met, His, Cys and Gln.. Functionally, probably plays an important role in intracellular peptide degradation. The chain is Peptidase B from Salmonella typhi.